The following is a 721-amino-acid chain: Glucans biosynthesis glucosyltransferase H (721 aa).

6 helical membrane-spanning segments follow: residues 53–75, 85–107, 404–426, 456–478, 490–512, and 567–589; these read VLIM…QVLQ, VVLV…ALAG, GIGA…LISL, WVFA…LVLI, LRTF…VMMV, and WPLL…VALL.

It belongs to the glycosyltransferase 2 family. OpgH subfamily.

The protein resides in the cell inner membrane. It participates in glycan metabolism; osmoregulated periplasmic glucan (OPG) biosynthesis. Functionally, involved in the biosynthesis of osmoregulated periplasmic glucans (OPGs). In Rhodopseudomonas palustris (strain ATCC BAA-98 / CGA009), this protein is Glucans biosynthesis glucosyltransferase H.